Reading from the N-terminus, the 511-residue chain is Thioredoxin reductase 2, mitochondrial (511 aa).

The N-terminal 21 residues, 1–21, are a transit peptide targeting the mitochondrion; the sequence is MAALRGAAARFRGRAPGGARG. 29 to 58 serves as a coordination point for FAD; it reads DLLVIGGGSGGLACAKEAAQLGKKVAVLDY. A disulfide bridge connects residues cysteine 74 and cysteine 79. Lysine 316 is modified (N6-succinyllysine). Residue histidine 484 is the Proton acceptor of the active site. The segment at residues 509-510 is a cross-link (cysteinyl-selenocysteine (Cys-Sec)); it reads CU. Selenocysteine 510 is a non-standard amino acid (selenocysteine).

It belongs to the class-I pyridine nucleotide-disulfide oxidoreductase family. Homodimer. It depends on FAD as a cofactor.

The protein resides in the mitochondrion. The enzyme catalyses [thioredoxin]-dithiol + NADP(+) = [thioredoxin]-disulfide + NADPH + H(+). Its activity is regulated as follows. Inhibited by 1-chloro-2,4-dinitrobenzene and by zinc, calcium, magnesium and Fe(2+) ions. Involved in the control of reactive oxygen species levels and the regulation of mitochondrial redox homeostasis. Maintains thioredoxin in a reduced state. May play a role in redox-regulated cell signaling. The polypeptide is Thioredoxin reductase 2, mitochondrial (TXNRD2) (Bos taurus (Bovine)).